We begin with the raw amino-acid sequence, 575 residues long: Golgi-associated kinase 1A (575 aa).

The first 29 residues, 1 to 29 (MASWLRRKLRGKRRPVIAFCLLMILSAMA), serve as a signal peptide directing secretion. The propeptide at 30 to 119 (VTRFPPQRPS…GDLRHPGRVR (90 aa)) is removed in mature form. The tract at residues 53-58 (TGAPAT) is O-glycosylated at one site. A compositionally biased stretch (basic and acidic residues) spans 143–153 (VGDPGTKDLGH). The tract at residues 143 to 162 (VGDPGTKDLGHPQHGSPIQE) is disordered. A propeptide spans 437 to 575 (RYCCGFEPEP…NLTLFRDEDP (139 aa)) (removed in mature form). N-linked (GlcNAc...) asparagine glycosylation occurs at Asn-566.

The protein belongs to the GASK family. In terms of processing, O-glycosylated with core 1 or possibly core 8 glycans. Proteolytically cleaved. Cleaved at Arg-120 and Arg-437 leading to a processed mature product of 35 kDa. The cleavage takes place in the Golgi apparatus. As to expression, expressed in skin, lung and colon (at protein level).

It localises to the secreted. Its subcellular location is the endoplasmic reticulum. It is found in the golgi apparatus. The protein localises to the membrane. The protein resides in the caveola. The protein is Golgi-associated kinase 1A of Homo sapiens (Human).